Consider the following 369-residue polypeptide: 3-dehydroquinate synthase (369 aa).

Residues 71–76, 105–109, 129–130, Lys142, Lys151, and 169–172 contribute to the NAD(+) site; these read DGECHK, GVIND, TT, and TLST. Zn(2+)-binding residues include Glu184, His247, and His264.

Belongs to the sugar phosphate cyclases superfamily. Dehydroquinate synthase family. Co(2+) serves as cofactor. The cofactor is Zn(2+). It depends on NAD(+) as a cofactor.

The protein resides in the cytoplasm. The enzyme catalyses 7-phospho-2-dehydro-3-deoxy-D-arabino-heptonate = 3-dehydroquinate + phosphate. Its pathway is metabolic intermediate biosynthesis; chorismate biosynthesis; chorismate from D-erythrose 4-phosphate and phosphoenolpyruvate: step 2/7. Functionally, catalyzes the conversion of 3-deoxy-D-arabino-heptulosonate 7-phosphate (DAHP) to dehydroquinate (DHQ). The chain is 3-dehydroquinate synthase from Dichelobacter nodosus (strain VCS1703A).